Reading from the N-terminus, the 607-residue chain is Tyrosine-protein kinase RYK (607 aa).

Residues 1–20 (MRGAARLGRPGRSCLPGARG) form a disordered region. The first 25 residues, 1 to 25 (MRGAARLGRPGRSCLPGARGLRAPP), serve as a signal peptide directing secretion. Residues 26–227 (PPPLLLLLAL…VHAAPTTSTR (202 aa)) lie on the Extracellular side of the membrane. The WIF domain occupies 66–194 (LYLSEDEVRR…VLNFKRRKMC (129 aa)). N-linked (GlcNAc...) asparagine glycosylation is found at Asn139, Asn174, Asn178, Asn182, and Asn209. An intrachain disulfide couples Cys159 to Cys194. A helical transmembrane segment spans residues 228-248 (VFYISVGVCCAVIFLVAIILA). At 249–607 (VLHLHSMKRI…EFHAALGAYV (359 aa)) the chain is on the cytoplasmic side. A compositionally biased stretch (low complexity) spans 266-282 (ASSSSQGLSQPSTQTTQ). Positions 266 to 290 (ASSSSQGLSQPSTQTTQYLRADTPN) are disordered. The region spanning 330–603 (ITLKDVLQEG…QCLTEFHAAL (274 aa)) is the Protein kinase domain. Residues 336 to 344 (LQEGTFGRI) and Lys364 contribute to the ATP site. Asp465 acts as the Proton acceptor in catalysis. The residue at position 495 (Tyr495) is a Phosphotyrosine; by autocatalysis.

The protein belongs to the protein kinase superfamily. Tyr protein kinase family. Interacts with DVL1 (via PDZ domain). Post-translationally, proteolytically cleaved, in part by presenilin, in response to WNT3 stimulation. Cleavage occurs during neuronal differentiation. In terms of tissue distribution, observed in all the tissues examined.

Its subcellular location is the membrane. The protein resides in the nucleus. It localises to the cytoplasm. The enzyme catalyses L-tyrosyl-[protein] + ATP = O-phospho-L-tyrosyl-[protein] + ADP + H(+). May be a coreceptor along with FZD8 of Wnt proteins, such as WNT1, WNT3, WNT3A and WNT5A. Involved in neuron differentiation, axon guidance, corpus callosum establishment and neurite outgrowth. In response to WNT3 stimulation, receptor C-terminal cleavage occurs in its transmembrane region and allows the C-terminal intracellular product to translocate from the cytoplasm to the nucleus where it plays a crucial role in neuronal development. The polypeptide is Tyrosine-protein kinase RYK (Homo sapiens (Human)).